The primary structure comprises 633 residues: Leucine-rich repeat and IQ domain-containing protein 3 (633 aa).

LRR repeat units follow at residues 51–72 (SLRV…QSCK), 73–94 (KLIK…NFWS), and 98–119 (NLKL…CVLS). Residues 132–179 (CPVSLKKGYRHVLVNSIWPLKALDHHVISDEEIIQNWRLPERFKTFSP) form the LRRCT domain. The region spanning 215–244 (HNSPVLIIQRWIRGFIVRKHLSPYFKHKKH) is the IQ domain. The interval 324–343 (SKQPRHHIHKGQKAMKAESE) is disordered. Basic residues predominate over residues 325-336 (KQPRHHIHKGQK). Residues 556–617 (IEKWEEQKYK…AKVEYIKTFY (62 aa)) adopt a coiled-coil conformation.

This chain is Leucine-rich repeat and IQ domain-containing protein 3 (Lrriq3), found in Mus musculus (Mouse).